A 323-amino-acid chain; its full sequence is Prenyl transferase (323 aa).

K46, R49, and H81 together coordinate isopentenyl diphosphate. 2 residues coordinate Mg(2+): D88 and D92. R97 lines the an all-trans-polyprenyl diphosphate pocket. R98 is an isopentenyl diphosphate binding site. Residues K174, T175, and Q212 each coordinate an all-trans-polyprenyl diphosphate.

It belongs to the FPP/GGPP synthase family. Mg(2+) serves as cofactor.

The protein resides in the plastid. Its subcellular location is the chloroplast. In terms of biological role, possible role in synthesis of the nonaprenyl side chain of plastoquinone or in synthesis of other prenyl chains such as undekaprenyl pyrophosphate. In Cyanidium caldarium (Red alga), this protein is Prenyl transferase (preA).